We begin with the raw amino-acid sequence, 603 residues long: NADH-ubiquinone oxidoreductase chain 5 (603 aa).

The next 17 helical transmembrane spans lie at 4–24 (YATM…TTFI), 38–58 (SIVA…LCLD), 87–107 (MMFI…SLWY), 114–134 (INQF…LVTA), 140–160 (LFIG…WWYA), 171–191 (AILY…WFLL), 210–230 (LIPL…LGLH), 241–261 (TPVS…FLLI), 272–292 (LAQT…AVCA), 301–320 (IVAF…IGIG), 325–347 (AFLH…GSII), 370–390 (STSL…TGFY), 407–429 (WALS…MILL), 457–477 (LTIG…PTSV), 482–502 (IPLY…LTAL), 537–557 (IPYL…DLIW), and 582–602 (GLIK…LLLI).

It belongs to the complex I subunit 5 family. Core subunit of respiratory chain NADH dehydrogenase (Complex I) which is composed of 45 different subunits.

The protein resides in the mitochondrion inner membrane. The enzyme catalyses a ubiquinone + NADH + 5 H(+)(in) = a ubiquinol + NAD(+) + 4 H(+)(out). Core subunit of the mitochondrial membrane respiratory chain NADH dehydrogenase (Complex I) which catalyzes electron transfer from NADH through the respiratory chain, using ubiquinone as an electron acceptor. Essential for the catalytic activity and assembly of complex I. The chain is NADH-ubiquinone oxidoreductase chain 5 (MT-ND5) from Gorilla gorilla gorilla (Western lowland gorilla).